Consider the following 391-residue polypeptide: tRNA (cytosine(38)-C(5))-methyltransferase (391 aa).

Residues 4–391 enclose the SAM-dependent MTase C5-type domain; it reads LRVLELYSGI…VSKLLTVLCE (388 aa). Residues 13 to 15, Asp34, 57 to 58, and Ser76 each bind S-adenosyl-L-methionine; these read IGG and IE. Cys79 is a catalytic residue. Ser376 lines the S-adenosyl-L-methionine pocket.

This sequence belongs to the class I-like SAM-binding methyltransferase superfamily. C5-methyltransferase family.

It localises to the cytoplasm. The enzyme catalyses cytidine(38) in tRNA + S-adenosyl-L-methionine = 5-methylcytidine(38) in tRNA + S-adenosyl-L-homocysteine + H(+). Its function is as follows. Specifically methylates cytosine 38 in the anticodon loop of tRNA(Asp). Has higher activity on tRNA(Asp) modified with queuosine at position 34. In Rattus norvegicus (Rat), this protein is tRNA (cytosine(38)-C(5))-methyltransferase (Trdmt1).